A 380-amino-acid polypeptide reads, in one-letter code: tRNA-specific 2-thiouridylase MnmA (380 aa).

Residues 10-17 (AMSGGVDS) and Leu-36 each bind ATP. Residue Cys-106 is the Nucleophile of the active site. Cys-106 and Cys-202 are oxidised to a cystine. Gly-130 provides a ligand contact to ATP. Residues 152 to 154 (KNQ) are interaction with tRNA. Cys-202 (cysteine persulfide intermediate) is an active-site residue. The interval 308-309 (RY) is interaction with tRNA.

The protein belongs to the MnmA/TRMU family.

The protein resides in the cytoplasm. The catalysed reaction is S-sulfanyl-L-cysteinyl-[protein] + uridine(34) in tRNA + AH2 + ATP = 2-thiouridine(34) in tRNA + L-cysteinyl-[protein] + A + AMP + diphosphate + H(+). Its function is as follows. Catalyzes the 2-thiolation of uridine at the wobble position (U34) of tRNA, leading to the formation of s(2)U34. This chain is tRNA-specific 2-thiouridylase MnmA, found in Leptospira biflexa serovar Patoc (strain Patoc 1 / Ames).